The following is a 107-amino-acid chain: L-rhamnose mutarotase (107 aa).

Tyr-18 contributes to the substrate binding site. His-22 (proton donor) is an active-site residue. Substrate contacts are provided by residues Tyr-41 and 76 to 77; that span reads WW.

It belongs to the rhamnose mutarotase family. As to quaternary structure, homodimer.

It is found in the cytoplasm. The enzyme catalyses alpha-L-rhamnose = beta-L-rhamnose. It participates in carbohydrate metabolism; L-rhamnose metabolism. Involved in the anomeric conversion of L-rhamnose. The sequence is that of L-rhamnose mutarotase from Paraburkholderia xenovorans (strain LB400).